The following is a 309-amino-acid chain: Probable cell division protein WhiA (309 aa).

Positions 275-309 form a DNA-binding region, H-T-H motif; sequence SLKELGELVPGGPISKSGINHRLRKINQYAEKLRA.

Belongs to the WhiA family.

Functionally, involved in cell division and chromosome segregation. The polypeptide is Probable cell division protein WhiA (Pediococcus pentosaceus (strain ATCC 25745 / CCUG 21536 / LMG 10740 / 183-1w)).